A 369-amino-acid polypeptide reads, in one-letter code: Maltose/maltodextrin import ATP-binding protein MalK (369 aa).

One can recognise an ABC transporter domain in the interval 4–234 (VTLRNVCKSY…PKNRFVAGFI (231 aa)). 36 to 43 (GPSGCGKS) lines the ATP pocket.

Belongs to the ABC transporter superfamily. Maltooligosaccharide importer (TC 3.A.1.1.1) family. The complex is composed of two ATP-binding proteins (MalK), two transmembrane proteins (MalG and MalK) and a solute-binding protein (MalE).

It localises to the cell inner membrane. The enzyme catalyses D-maltose(out) + ATP + H2O = D-maltose(in) + ADP + phosphate + H(+). Its function is as follows. Part of the ABC transporter complex MalEFGK involved in maltose/maltodextrin import. Responsible for energy coupling to the transport system. The sequence is that of Maltose/maltodextrin import ATP-binding protein MalK from Aliivibrio fischeri (strain ATCC 700601 / ES114) (Vibrio fischeri).